Consider the following 424-residue polypeptide: ATP-sensitive inward rectifier potassium channel 8 (424 aa).

The Cytoplasmic portion of the chain corresponds to 1 to 69 (MLARKSIIPE…IFTTLVDLKW (69 aa)). The residue at position 6 (Ser6) is a Phosphoserine. A helical membrane pass occupies residues 70 to 94 (RHTLVIFTMSFLCSWLLFAIMWWLV). The Extracellular portion of the chain corresponds to 95-126 (AFAHGDIYAYMEKSGMEKSGLESTVCVTNVRS). The segment at residues 127 to 138 (FTSAFLFSIEVQ) is an intramembrane region (helical; Pore-forming). Positions 139 to 145 (VTIGFGG) form an intramembrane region, pore-forming. Positions 140–145 (TIGFGG) match the Selectivity filter motif. Residues 146 to 154 (RMMTEECPL) are Extracellular-facing. The chain crosses the membrane as a helical span at residues 155–176 (AITVLILQNIVGLIINAVMLGC). At 177–424 (IFMKTAQAHR…PEGNQNTSES (248 aa)) the chain is on the cytoplasmic side. A disordered region spans residues 375–424 (SHQNSLRKRNSMRRNNSMRRNNSIRRNNSSLMVPKVQFMTPEGNQNTSES). The segment covering 387 to 404 (RRNNSMRRNNSIRRNNSS) has biased composition (low complexity).

Belongs to the inward rectifier-type potassium channel (TC 1.A.2.1) family. KCNJ8 subfamily. In terms of assembly, interacts with ABCC9. As to expression, predominantly detected in fetal and adult heart.

Its subcellular location is the membrane. It catalyses the reaction K(+)(in) = K(+)(out). Functionally, inward rectifier potassium channels are characterized by a greater tendency to allow potassium to flow into the cell rather than out of it. Their voltage dependence is regulated by the concentration of extracellular potassium; as external potassium is raised, the voltage range of the channel opening shifts to more positive voltages. The inward rectification is mainly due to the blockage of outward current by internal magnesium. This channel is activated by internal ATP and can be blocked by external barium. Can form a sulfonylurea-sensitive but ATP-insensitive potassium channel with ABCC9. This chain is ATP-sensitive inward rectifier potassium channel 8 (KCNJ8), found in Homo sapiens (Human).